Reading from the N-terminus, the 368-residue chain is Glutamate 5-kinase (368 aa).

Lysine 15 contacts ATP. Serine 55, aspartate 143, and asparagine 155 together coordinate substrate. Residues 175-176 (SD) and 217-223 (SGGMVSK) each bind ATP. One can recognise a PUA domain in the interval 277 to 354 (EGRLTIDAGA…DAQEAALGYA (78 aa)).

Belongs to the glutamate 5-kinase family.

The protein resides in the cytoplasm. The enzyme catalyses L-glutamate + ATP = L-glutamyl 5-phosphate + ADP. It functions in the pathway amino-acid biosynthesis; L-proline biosynthesis; L-glutamate 5-semialdehyde from L-glutamate: step 1/2. Functionally, catalyzes the transfer of a phosphate group to glutamate to form L-glutamate 5-phosphate. This Sphingopyxis alaskensis (strain DSM 13593 / LMG 18877 / RB2256) (Sphingomonas alaskensis) protein is Glutamate 5-kinase.